Here is a 57-residue protein sequence, read N- to C-terminus: Putative secreted protein MT0250 (57 aa).

An N-terminal signal peptide occupies residues 1–32 (MNRIVAPAAASVVVGLLLGAAAIFGVTLMVQQ). Residues 34–57 (KKPPLPGGDPSSSVLNRVEYGNRS) are disordered.

This Mycobacterium tuberculosis (strain CDC 1551 / Oshkosh) protein is Putative secreted protein MT0250.